The chain runs to 845 residues: AdoMet-dependent rRNA methyltransferase SPB1 (845 aa).

Residues G58, W60, D78, D94, and D119 each contribute to the S-adenosyl-L-methionine site. K159 serves as the catalytic Proton acceptor. 2 disordered regions span residues 223-247 (GGGNESKQNNEAKIFNPEKFSSQRQ) and 279-298 (SLNKFDLPAPKDDDNDDDDH). Coiled-coil stretches lie at residues 366-402 (TEEQKIDQELQDLINKQKQKAKRLKKNANELKQKEII) and 464-502 (DEEEINDNDKDSADELDELENQLDDMYHQYQARKAERDA). A compositionally biased stretch (basic and acidic residues) spans 496–512 (RKAERDANYRAKQARGD). Disordered stretches follow at residues 496–546 (RKAE…DDDE), 587–660 (ENKT…HQQK), and 788–821 (KLNKKQKQKPKTTVVVARGSNRGLSGRPKGVKGK). Composition is skewed to acidic residues over residues 513 to 528 (ADDEAWNGIEEDNDDV), 536 to 545 (MESESDDDDD), 610 to 624 (NENDDGDNDEEESDF), and 633 to 648 (DDDDDDESMNSDDDEV). A coiled-coil region spans residues 739–796 (IKKVLEAQSRKKLRALKRLEKIKKKSDLINEDSGKSERDKADEISKLMKKLNKKQKQK). Positions 788 to 797 (KLNKKQKQKP) are enriched in basic residues.

The protein belongs to the class I-like SAM-binding methyltransferase superfamily. RNA methyltransferase RlmE family. SPB1 subfamily. Component of the nucleolar and nucleoplasmic pre-60S ribosomal particle.

The protein localises to the nucleus. Its subcellular location is the nucleolus. It catalyses the reaction a ribonucleotide in rRNA + S-adenosyl-L-methionine = a 2'-O-methylribonucleotide in rRNA + S-adenosyl-L-homocysteine + H(+). Required for proper assembly of pre-ribosomal particles during the biogenesis of the 60S ribosomal subunit. The sequence is that of AdoMet-dependent rRNA methyltransferase SPB1 from Candida albicans (strain SC5314 / ATCC MYA-2876) (Yeast).